The chain runs to 337 residues: UDP-N-acetylenolpyruvoylglucosamine reductase (337 aa).

The FAD-binding PCMH-type domain occupies Ala16–Ala187. Arg160 is a catalytic residue. The active-site Proton donor is the Ser237. Glu333 is a catalytic residue.

FAD serves as cofactor.

Its subcellular location is the cytoplasm. It catalyses the reaction UDP-N-acetyl-alpha-D-muramate + NADP(+) = UDP-N-acetyl-3-O-(1-carboxyvinyl)-alpha-D-glucosamine + NADPH + H(+). The protein operates within cell wall biogenesis; peptidoglycan biosynthesis. Its function is as follows. Cell wall formation. The sequence is that of UDP-N-acetylenolpyruvoylglucosamine reductase from Dechloromonas aromatica (strain RCB).